A 452-amino-acid polypeptide reads, in one-letter code: Phosphoglucosamine mutase (452 aa).

Ser103 functions as the Phosphoserine intermediate in the catalytic mechanism. The Mg(2+) site is built by Ser103, Asp243, Asp245, and Asp247. Phosphoserine is present on Ser103.

It belongs to the phosphohexose mutase family. Requires Mg(2+) as cofactor. In terms of processing, activated by phosphorylation.

It catalyses the reaction alpha-D-glucosamine 1-phosphate = D-glucosamine 6-phosphate. Functionally, catalyzes the conversion of glucosamine-6-phosphate to glucosamine-1-phosphate. The sequence is that of Phosphoglucosamine mutase from Exiguobacterium sp. (strain ATCC BAA-1283 / AT1b).